A 602-amino-acid chain; its full sequence is MATPCIQNAFRRKTLPVRIGDLFVGSEHSIKIQSMTTTATTDVDGTVRQICALQEWGCDIVRVTVQGLREVHACEHIKDRLIQQNISIPLVADIHFFPQAAIHVVDCVDKVRINPGNYVDKRNMFTGKIYSDEQYAHSLEHLMNKFSPLVEKCKRLGKAMRIGVNHGSLSERVTQRYGNTIEGMVYSALEYAEVCVAMDYHDVIFSMKSSNPKVMVAAYRSLAYELDQREWSYPLHLGVTEAGSGTAGIVKSAVGIGTLLSEGLGDTIRCSLTGSPINEIPICIDLLKQTTELSERWGEADNPFAIHSSKQLGTRNTLNTPPWGNVYGLLINLTDVQLLTAEPIELLQCLGIDTTTGKIDPTTPEGVVVPKAMRSSPIVSEIEKHLLVFNKEDAPILNPMNEEEWLSEETLSAPFVYFEVTDIHTARRFFSLRQHSTQPVCLSFSLDPHLSKNEAIIDLSARLGALLLDGLGSCVLLDFVDIKLSRTLGFLILQSANIRSVTVEYVSCPGCGRTLFDLLAVSQRIRERTKHLPGGLKIAVMGCIVNGPGEMADADFGYVGSKPGMIDLYVKHKCVKSCIPIENAEEELVQLLKEHGVWKEPE.

[4Fe-4S] cluster-binding residues include cysteine 508, cysteine 511, cysteine 543, and glutamate 550.

Belongs to the IspG family. [4Fe-4S] cluster is required as a cofactor.

It carries out the reaction (2E)-4-hydroxy-3-methylbut-2-enyl diphosphate + oxidized [flavodoxin] + H2O + 2 H(+) = 2-C-methyl-D-erythritol 2,4-cyclic diphosphate + reduced [flavodoxin]. It participates in isoprenoid biosynthesis; isopentenyl diphosphate biosynthesis via DXP pathway; isopentenyl diphosphate from 1-deoxy-D-xylulose 5-phosphate: step 5/6. Converts 2C-methyl-D-erythritol 2,4-cyclodiphosphate (ME-2,4cPP) into 1-hydroxy-2-methyl-2-(E)-butenyl 4-diphosphate. The polypeptide is 4-hydroxy-3-methylbut-2-en-1-yl diphosphate synthase (flavodoxin) (Chlamydia trachomatis serovar L2b (strain UCH-1/proctitis)).